The following is an 802-amino-acid chain: Threonine--tRNA ligase 2, cytoplasmic (802 aa).

At Ala2 the chain carries N-acetylalanine. 2 coiled-coil regions span residues 3–23 (AEAL…EDIR) and 76–96 (AEER…AQEA). Residues 86-98 (ESAELEAAQEAGA) show a composition bias toward low complexity. Residues 86-123 (ESAELEAAQEAGAQPPPSQSQDKDMKKKKMKESEADSE) form a disordered region. Residues 106-123 (QDKDMKKKKMKESEADSE) show a composition bias toward basic and acidic residues. A TGS domain is found at 157–222 (DTSNIITVRV…EGDSSLELLT (66 aa)). Ser453 carries the phosphoserine modification. The Nuclear localization signal motif lies at 786–792 (KLKNLRK).

This sequence belongs to the class-II aminoacyl-tRNA synthetase family. May be a component of the multisynthetase complex (MSC), a large multi-subunit complex which contains at least eight different aminoacyl-tRNA synthetases plus three auxillary subunits AIMP1, AIMP2 and EEF1E1. Interacts with the MSC components EPRS1, AIMP1, AIMP2 and KARS1.

The protein resides in the cytoplasm. It localises to the nucleus. The catalysed reaction is tRNA(Thr) + L-threonine + ATP = L-threonyl-tRNA(Thr) + AMP + diphosphate + H(+). In terms of biological role, catalyzes the attachment of threonine to tRNA(Thr) in a two-step reaction: threonine is first activated by ATP to form Thr-AMP and then transferred to the acceptor end of tRNA(Thr). Also edits incorrectly charged tRNA(Thr) via its editing domain, at the post-transfer stage. The protein is Threonine--tRNA ligase 2, cytoplasmic of Homo sapiens (Human).